The chain runs to 512 residues: Nuclear fusion protein FUS1 (512 aa).

The chain crosses the membrane as a helical span at residues 72-96 (IGLSIGLPIGIFCFGLLILLCYFYL). Residues 97 to 512 (KRNSVSISNP…VPGDCLQEYD (416 aa)) form a hydrophilic region. Threonine 178 is subject to Phosphothreonine. A phosphoserine mark is found at serine 190 and serine 256. Phosphothreonine occurs at positions 281 and 424. The SH3 domain maps to 436–512 (QLGKTYTVIQ…VPGDCLQEYD (77 aa)).

In terms of processing, O-glycosylated.

The protein localises to the membrane. In terms of biological role, required for cell fusion. Negatively regulates Sho1p signaling to ensure efficient cell fusion. Functionally, interacts with SHO1. The protein is Nuclear fusion protein FUS1 (FUS1) of Saccharomyces cerevisiae (strain ATCC 204508 / S288c) (Baker's yeast).